The primary structure comprises 101 residues: Small ribosomal subunit protein uS14 (101 aa).

The protein belongs to the universal ribosomal protein uS14 family. In terms of assembly, part of the 30S ribosomal subunit. Contacts proteins S3 and S10.

In terms of biological role, binds 16S rRNA, required for the assembly of 30S particles and may also be responsible for determining the conformation of the 16S rRNA at the A site. In Photobacterium profundum (strain SS9), this protein is Small ribosomal subunit protein uS14.